A 116-amino-acid polypeptide reads, in one-letter code: MRHRCRVHKLGKPADQRKALLRSLSTQLIRHGRVTTTKARAKAVRSQVEKMITLAKDGSLASRRQALGYIYDKQLVHALFDQVADRYGDRNGGYTRIIRTIRRRGDNAEMAIIELT.

This sequence belongs to the bacterial ribosomal protein bL17 family. In terms of assembly, part of the 50S ribosomal subunit. Contacts protein L32.

The chain is Large ribosomal subunit protein bL17 from Acaryochloris marina (strain MBIC 11017).